The primary structure comprises 129 residues: Large ribosomal subunit protein bL20 (129 aa).

This sequence belongs to the bacterial ribosomal protein bL20 family.

Its function is as follows. Binds directly to 23S ribosomal RNA and is necessary for the in vitro assembly process of the 50S ribosomal subunit. It is not involved in the protein synthesizing functions of that subunit. This chain is Large ribosomal subunit protein bL20, found in Mycobacterium tuberculosis (strain ATCC 25177 / H37Ra).